The chain runs to 264 residues: Thymidylate synthase (264 aa).

Arginine 21 serves as a coordination point for dUMP. Histidine 51 contributes to the (6R)-5,10-methylene-5,6,7,8-tetrahydrofolate binding site. 126–127 (RR) is a binding site for dUMP. Cysteine 146 (nucleophile) is an active-site residue. Residues 166-169 (RSCD), asparagine 177, and 207-209 (HLY) contribute to the dUMP site. Aspartate 169 is a (6R)-5,10-methylene-5,6,7,8-tetrahydrofolate binding site. Alanine 263 is a binding site for (6R)-5,10-methylene-5,6,7,8-tetrahydrofolate.

The protein belongs to the thymidylate synthase family. Bacterial-type ThyA subfamily. As to quaternary structure, homodimer.

It is found in the cytoplasm. It carries out the reaction dUMP + (6R)-5,10-methylene-5,6,7,8-tetrahydrofolate = 7,8-dihydrofolate + dTMP. The protein operates within pyrimidine metabolism; dTTP biosynthesis. Its function is as follows. Catalyzes the reductive methylation of 2'-deoxyuridine-5'-monophosphate (dUMP) to 2'-deoxythymidine-5'-monophosphate (dTMP) while utilizing 5,10-methylenetetrahydrofolate (mTHF) as the methyl donor and reductant in the reaction, yielding dihydrofolate (DHF) as a by-product. This enzymatic reaction provides an intracellular de novo source of dTMP, an essential precursor for DNA biosynthesis. The sequence is that of Thymidylate synthase from Enterobacter sp. (strain 638).